Here is a 349-residue protein sequence, read N- to C-terminus: UDP-N-acetylenolpyruvoylglucosamine reductase (349 aa).

One can recognise an FAD-binding PCMH-type domain in the interval 25 to 197; that stretch reads GIDARARYAA…VSVTFRLPKR (173 aa). The active site involves Arg173. Catalysis depends on Ser249, which acts as the Proton donor. Glu345 is a catalytic residue.

It belongs to the MurB family. FAD is required as a cofactor.

It is found in the cytoplasm. The enzyme catalyses UDP-N-acetyl-alpha-D-muramate + NADP(+) = UDP-N-acetyl-3-O-(1-carboxyvinyl)-alpha-D-glucosamine + NADPH + H(+). Its pathway is cell wall biogenesis; peptidoglycan biosynthesis. Functionally, cell wall formation. This is UDP-N-acetylenolpyruvoylglucosamine reductase from Burkholderia multivorans (strain ATCC 17616 / 249).